The sequence spans 59 residues: Conorfamide-Ep1 (59 aa).

The first 19 residues, 1–19 (MSGCGFLLLALLLLVTVEA), serve as a signal peptide directing secretion. A propeptide spanning residues 20-25 (TKMEKK) is cleaved from the precursor. At Ile-43 the chain carries Isoleucine amide. A propeptide spanning residues 45-59 (RRDMQSPLLSERLRF) is cleaved from the precursor.

This sequence belongs to the FARP (FMRFamide related peptide) family. Expressed by the venom duct.

Its subcellular location is the secreted. Functionally, neurotoxin that is active on vertebrates. When tested at high doses (10 uM), the toxin affects all zebrafish and mouse DRG neurons in culture, which could be an indication of an effect on a widely expressed receptor or ion channel found in both species. At low doses (1 uM), the effects of the toxin are confined to a specific subpopulation of zebrafish and mouse DRG neurons. In vivo, it induces long-lasting dramatic alterations in the locomotor behavior of zebrafish larvae. It rapidly induces hypoactivity and death of larvae at high doses and it causes hyperactivity at lower doses. In zebrafish adults, intramuscular injection causes the decrease of the movements and visited spaces. In mice, intracranial injection causes lethargy and prolonges sleeping phases and reduced movement. This chain is Conorfamide-Ep1, found in Conus episcopatus (Bishop's cone).